We begin with the raw amino-acid sequence, 375 residues long: Delta(9) fatty acid conjugase-like enzyme (375 aa).

The next 2 membrane-spanning stretches (helical) occupy residues leucine 38–valine 58 and leucine 66–leucine 86. The short motif at histidine 94–histidine 98 is the Histidine box-1 element. Positions histidine 130–histidine 134 match the Histidine box-2 motif. The next 3 helical transmembrane spans lie at phenylalanine 168–phenylalanine 188, valine 219–alanine 239, and glycine 241–phenylalanine 261. The Histidine box-3 signature appears at histidine 307–histidine 311.

This sequence belongs to the fatty acid desaturase type 1 family.

The protein localises to the membrane. Functionally, involved in the biosynthesis of dimorphecolic acid (9-OH-18:2(10E,12E)). Catalyzes the formation of the C-9 hydroxyl group and the (E)-delta(10) double bond from the trans-linoleic acid (16:2(9Z,12E)) produced by FAD2-1. Very limited activity with cis-linoleic acid (16:2(9Z,12Z)). This chain is Delta(9) fatty acid conjugase-like enzyme, found in Dimorphotheca sinuata (African daisy).